The chain runs to 191 residues: Reticulon-like protein B15 (191 aa).

Residues Val13–Glu191 enclose the Reticulon domain. A run of 3 helical transmembrane segments spans residues Ile23–Glu43, Val47–Phe67, and Val122–Leu142.

The protein localises to the endoplasmic reticulum membrane. This chain is Reticulon-like protein B15 (RTNLB15), found in Arabidopsis thaliana (Mouse-ear cress).